We begin with the raw amino-acid sequence, 131 residues long: Large ribosomal subunit protein bL12 (131 aa).

Residues 99–125 (ESTPKPIKEGTNKDDAEETKKKLEEAG) show a composition bias toward basic and acidic residues. Residues 99–131 (ESTPKPIKEGTNKDDAEETKKKLEEAGAKVTVK) are disordered.

It belongs to the bacterial ribosomal protein bL12 family. Homodimer. Part of the ribosomal stalk of the 50S ribosomal subunit. Forms a multimeric L10(L12)X complex, where L10 forms an elongated spine to which 2 to 4 L12 dimers bind in a sequential fashion. Binds GTP-bound translation factors.

Functionally, forms part of the ribosomal stalk which helps the ribosome interact with GTP-bound translation factors. Is thus essential for accurate translation. The protein is Large ribosomal subunit protein bL12 of Gloeothece citriformis (strain PCC 7424) (Cyanothece sp. (strain PCC 7424)).